The following is a 146-amino-acid chain: Hemoglobin subunit beta (146 aa).

Residues 2 to 146 (PFSAHEEKLI…VAAALSAEYH (145 aa)) form the Globin domain. 2 residues coordinate heme b: histidine 63 and histidine 92.

It belongs to the globin family. As to quaternary structure, heterotetramer of two alpha chains and two beta chains. In terms of tissue distribution, red blood cells.

Functionally, involved in oxygen transport from the lung to the various peripheral tissues. The chain is Hemoglobin subunit beta (HBB) from Caiman crocodilus (Spectacled caiman).